A 282-amino-acid polypeptide reads, in one-letter code: Probable protein phosphatase 2C 10 (282 aa).

In terms of domain architecture, PPM-type phosphatase spans 34-281; it reads KFGYSLVKGK…DDISCIVVRL (248 aa). Mn(2+)-binding residues include aspartate 71, glycine 72, aspartate 233, and aspartate 272.

Belongs to the PP2C family. Mg(2+) is required as a cofactor. Requires Mn(2+) as cofactor.

The enzyme catalyses O-phospho-L-seryl-[protein] + H2O = L-seryl-[protein] + phosphate. It carries out the reaction O-phospho-L-threonyl-[protein] + H2O = L-threonyl-[protein] + phosphate. The chain is Probable protein phosphatase 2C 10 from Arabidopsis thaliana (Mouse-ear cress).